The following is a 240-amino-acid chain: Uridylate kinase (240 aa).

Residue 13–16 (KASG) coordinates ATP. Residues 21-26 (GSQGFG) form an involved in allosteric activation by GTP region. Gly55 provides a ligand contact to UMP. ATP contacts are provided by Gly56 and Arg60. Residues Asp75 and 136–143 (TGNPFFTT) contribute to the UMP site. Residues Thr163, Gln164, Tyr169, and Asp172 each contribute to the ATP site.

Belongs to the UMP kinase family. In terms of assembly, homohexamer.

The protein resides in the cytoplasm. The catalysed reaction is UMP + ATP = UDP + ADP. Its pathway is pyrimidine metabolism; CTP biosynthesis via de novo pathway; UDP from UMP (UMPK route): step 1/1. Its activity is regulated as follows. Allosterically activated by GTP. Inhibited by UTP. Functionally, catalyzes the reversible phosphorylation of UMP to UDP. The polypeptide is Uridylate kinase (Brucella suis biovar 1 (strain 1330)).